Here is a 335-residue protein sequence, read N- to C-terminus: Terpene synthase 4 (335 aa).

Residues 103-108 carry the DDxx(x)D/E motif motif; that stretch reads DDYIFE. The NDxxSxxxD/E motif signature appears at 243 to 251; that stretch reads NDLYSFNRE.

Belongs to the terpene synthase family.

It catalyses the reaction (2E,6E)-farnesyl diphosphate + H2O = (6E)-nerolidol + diphosphate. Its function is as follows. Terpene synthase that converts its substrate farnesyl diphosphate (FPP) into the sesquiterpene (E)-nerolidol. The polypeptide is Terpene synthase 4 (Dictyostelium discoideum (Social amoeba)).